A 513-amino-acid chain; its full sequence is GMP synthase [glutamine-hydrolyzing] (513 aa).

In terms of domain architecture, Glutamine amidotransferase type-1 spans 9-198; the sequence is LILVLDFGSQ…IREICKCTGE (190 aa). The active-site Nucleophile is Cys-86. Active-site residues include His-172 and Glu-174. The GMPS ATP-PPase domain maps to 199–388; that stretch reads WTMENFIEIE…LGIPEHLVWR (190 aa). 226–232 provides a ligand contact to ATP; that stretch reads SGGVDSS.

In terms of assembly, homodimer.

The catalysed reaction is XMP + L-glutamine + ATP + H2O = GMP + L-glutamate + AMP + diphosphate + 2 H(+). It functions in the pathway purine metabolism; GMP biosynthesis; GMP from XMP (L-Gln route): step 1/1. Its function is as follows. Catalyzes the synthesis of GMP from XMP. The protein is GMP synthase [glutamine-hydrolyzing] of Macrococcus caseolyticus (strain JCSC5402) (Macrococcoides caseolyticum).